The chain runs to 607 residues: Bifunctional endo-1,4-beta-xylanase A (607 aa).

An N-terminal signal peptide occupies residues 1–18; the sequence is MRTIKFFFAVAIATVAKA. The GH11 1 domain maps to 35–242; that stretch reads NGQTQHKGVA…SSGIADVTKL (208 aa). Catalysis depends on Glu-141, which acts as the Nucleophile. The Proton donor role is filled by Glu-223. Over residues 248-272 the composition is skewed to polar residues; that stretch reads QKGSNPAPTSTGTVPSSSAGGSTAN. Residues 248 to 284 form a disordered region; that stretch reads QKGSNPAPTSTGTVPSSSAGGSTANGKKFTVGNGQNQ. The GH11 2 domain maps to 280 to 487; it reads NGQNQHKGVN…SSGVADVTLL (208 aa). Glu-386 acts as the Nucleophile in catalysis. The Proton donor role is filled by Glu-474. Residues 493 to 514 are disordered; that stretch reads PKGSSPATSAAPRTTTRTTTRT. Residues 496–514 show a composition bias toward low complexity; the sequence is SSPATSAAPRTTTRTTTRT. CBM10 domains are found at residues 523–563 and 566–606; these read KCSA…CGCG and QCSS…CGCG.

It belongs to the glycosyl hydrolase 11 (cellulase G) family.

The enzyme catalyses Endohydrolysis of (1-&gt;4)-beta-D-xylosidic linkages in xylans.. It functions in the pathway glycan degradation; xylan degradation. Its function is as follows. Hydrolyzes xylans into xylobiose and xylose. This chain is Bifunctional endo-1,4-beta-xylanase A (XYNA), found in Neocallimastix patriciarum (Rumen fungus).